The primary structure comprises 428 residues: Glutamate-1-semialdehyde 2,1-aminomutase (428 aa).

K265 carries the post-translational modification N6-(pyridoxal phosphate)lysine.

This sequence belongs to the class-III pyridoxal-phosphate-dependent aminotransferase family. HemL subfamily. As to quaternary structure, homodimer. Requires pyridoxal 5'-phosphate as cofactor.

It is found in the cytoplasm. The enzyme catalyses (S)-4-amino-5-oxopentanoate = 5-aminolevulinate. It participates in porphyrin-containing compound metabolism; protoporphyrin-IX biosynthesis; 5-aminolevulinate from L-glutamyl-tRNA(Glu): step 2/2. This is Glutamate-1-semialdehyde 2,1-aminomutase from Methylobacillus flagellatus (strain ATCC 51484 / DSM 6875 / VKM B-1610 / KT).